The primary structure comprises 278 residues: HTH-type transcriptional activator RhaS (278 aa).

In terms of domain architecture, HTH araC/xylS-type spans 174–272 (NLLLAWLEDH…NWSPRDIRQG (99 aa)). 2 consecutive DNA-binding regions (H-T-H motif) follow at residues 191–212 (DAVA…KQQT) and 239–262 (VTDI…RREF).

Binds DNA as a dimer.

Its subcellular location is the cytoplasm. Activates expression of the rhaBAD and rhaT operons. This is HTH-type transcriptional activator RhaS from Escherichia coli O139:H28 (strain E24377A / ETEC).